Consider the following 380-residue polypeptide: Probable protein phosphatase 2C 63 (380 aa).

One can recognise a PPM-type phosphatase domain in the interval aspartate 35 to leucine 338. The Mn(2+) site is built by aspartate 66, glycine 67, aspartate 270, and aspartate 329.

This sequence belongs to the PP2C family. Mg(2+) serves as cofactor. Requires Mn(2+) as cofactor.

It catalyses the reaction O-phospho-L-seryl-[protein] + H2O = L-seryl-[protein] + phosphate. The catalysed reaction is O-phospho-L-threonyl-[protein] + H2O = L-threonyl-[protein] + phosphate. Functionally, may dephosphorylate and repress plasma membrane H(+)-ATPases (PM H(+)-ATPases, e.g. AHA1 and AHA2), thus influencing negatively plant growth and fitness. The polypeptide is Probable protein phosphatase 2C 63 (Arabidopsis thaliana (Mouse-ear cress)).